The sequence spans 274 residues: Undecaprenyl-diphosphatase 2 (274 aa).

6 helical membrane passes run 47 to 64 (VFVI…CWEY), 82 to 102 (WKFV…GLTF), 110 to 130 (LFSP…ILWA), 185 to 205 (ATEF…LYDL), 219 to 239 (LMAV…RGLI), and 249 to 269 (VFAW…WSGL).

It belongs to the UppP family.

It is found in the cell inner membrane. The catalysed reaction is di-trans,octa-cis-undecaprenyl diphosphate + H2O = di-trans,octa-cis-undecaprenyl phosphate + phosphate + H(+). In terms of biological role, catalyzes the dephosphorylation of undecaprenyl diphosphate (UPP). Confers resistance to bacitracin. The chain is Undecaprenyl-diphosphatase 2 from Rhodospirillum rubrum (strain ATCC 11170 / ATH 1.1.1 / DSM 467 / LMG 4362 / NCIMB 8255 / S1).